Here is a 512-residue protein sequence, read N- to C-terminus: Putative UDP-glucuronosyltransferase ugt-55 (512 aa).

Positions methionine 1–serine 22 are cleaved as a signal peptide. Residues isoleucine 487–isoleucine 507 form a helical membrane-spanning segment.

Belongs to the UDP-glycosyltransferase family.

It is found in the membrane. It catalyses the reaction glucuronate acceptor + UDP-alpha-D-glucuronate = acceptor beta-D-glucuronoside + UDP + H(+). The sequence is that of Putative UDP-glucuronosyltransferase ugt-55 (ugt-55) from Caenorhabditis elegans.